We begin with the raw amino-acid sequence, 471 residues long: Thymidine phosphorylase (471 aa).

Residues 1-10 (MAAPGTPPPS) are compositionally biased toward pro residues. The disordered stretch occupies residues 1-21 (MAAPGTPPPSASGGGGGEPRQ). Phosphothreonine is present on Thr-6. Substrate is bound by residues His-102, Arg-188, Ser-203, and Lys-207.

It belongs to the thymidine/pyrimidine-nucleoside phosphorylase family. As to quaternary structure, homodimer.

It carries out the reaction thymidine + phosphate = 2-deoxy-alpha-D-ribose 1-phosphate + thymine. It participates in pyrimidine metabolism; dTMP biosynthesis via salvage pathway; dTMP from thymine: step 1/2. In terms of biological role, catalyzes the reversible phosphorolysis of thymidine. The produced molecules are then utilized as carbon and energy sources or in the rescue of pyrimidine bases for nucleotide synthesis. This chain is Thymidine phosphorylase (Tymp), found in Mus musculus (Mouse).